Here is a 518-residue protein sequence, read N- to C-terminus: D-aminopeptidase (518 aa).

The active-site Nucleophile is the Ser-62. The active-site Proton donor/acceptor is the Lys-65. Positions 477-487 (QRSMDAPSPGE) are important for specificity. Asp-481 is a substrate binding site.

It belongs to the peptidase S12 family. As to quaternary structure, homodimer.

It carries out the reaction Release of an N-terminal D-amino acid from a peptide, Xaa-|-Yaa-, in which Xaa is preferably D-Ala, D-Ser or D-Thr. D-amino acid amides and methyl esters also are hydrolyzed, as is glycine amide.. Its activity is regulated as follows. Inhibited by beta-lactam compounds such as 6-aminopenicillic acid, 7-aminocephalosporanic acid, benzylpenicillin and ampicillin. Inhibited by p-chloromercuribenzoate. In terms of biological role, hydrolyzes N-terminal residues in D-amino acid-containing peptides. In Brucella ovis (strain ATCC 25840 / 63/290 / NCTC 10512), this protein is D-aminopeptidase.